The primary structure comprises 388 residues: Envelope protein F13 homolog (388 aa).

The N-myristoyl glycine; by host moiety is linked to residue Gly-2. The PLD phosphodiesterase domain maps to Gly-310–His-337.

It localises to the virion membrane. The protein resides in the host endoplasmic reticulum membrane. Envelope protein associated with the inner side of the enveloped virion (EV) membrane. The protein is Envelope protein F13 homolog (P43K) of Molluscum contagiosum virus subtype 2 (MOCV).